Reading from the N-terminus, the 289-residue chain is 2-hydroxy-6-oxononadienedioate/2-hydroxy-6-oxononatrienedioate hydrolase (289 aa).

The Proton acceptor role is filled by histidine 269.

It belongs to the AB hydrolase superfamily. MhpC family. Homodimer.

It carries out the reaction (2Z,4E)-2-hydroxy-6-oxonona-2,4-dienedioate + H2O = (2Z)-2-hydroxypenta-2,4-dienoate + succinate + H(+). The catalysed reaction is (2Z,4E,7E)-2-hydroxy-6-oxonona-2,4,7-trienedioate + H2O = (2Z)-2-hydroxypenta-2,4-dienoate + fumarate + H(+). Its pathway is aromatic compound metabolism; 3-phenylpropanoate degradation. Catalyzes the cleavage of the C5-C6 bond of 2-hydroxy-6-oxononadienedioate and 2-hydroxy-6-oxononatrienedioate, a dienol ring fission product of the bacterial meta-cleavage pathway for degradation of phenylpropionic acid. In Cupriavidus pinatubonensis (strain JMP 134 / LMG 1197) (Cupriavidus necator (strain JMP 134)), this protein is 2-hydroxy-6-oxononadienedioate/2-hydroxy-6-oxononatrienedioate hydrolase.